A 226-amino-acid polypeptide reads, in one-letter code: Uracil-DNA glycosylase (226 aa).

The active-site Proton acceptor is aspartate 64.

Belongs to the uracil-DNA glycosylase (UDG) superfamily. UNG family.

The protein localises to the cytoplasm. The catalysed reaction is Hydrolyzes single-stranded DNA or mismatched double-stranded DNA and polynucleotides, releasing free uracil.. In terms of biological role, excises uracil residues from the DNA which can arise as a result of misincorporation of dUMP residues by DNA polymerase or due to deamination of cytosine. In Fusobacterium nucleatum subsp. nucleatum (strain ATCC 25586 / DSM 15643 / BCRC 10681 / CIP 101130 / JCM 8532 / KCTC 2640 / LMG 13131 / VPI 4355), this protein is Uracil-DNA glycosylase.